Consider the following 180-residue polypeptide: Large ribosomal subunit protein uL5 (180 aa).

It belongs to the universal ribosomal protein uL5 family. In terms of assembly, part of the 50S ribosomal subunit; part of the 5S rRNA/L5/L18/L25 subcomplex. Contacts the 5S rRNA and the P site tRNA. Forms a bridge to the 30S subunit in the 70S ribosome.

Functionally, this is one of the proteins that bind and probably mediate the attachment of the 5S RNA into the large ribosomal subunit, where it forms part of the central protuberance. In the 70S ribosome it contacts protein S13 of the 30S subunit (bridge B1b), connecting the 2 subunits; this bridge is implicated in subunit movement. Contacts the P site tRNA; the 5S rRNA and some of its associated proteins might help stabilize positioning of ribosome-bound tRNAs. The protein is Large ribosomal subunit protein uL5 of Lactobacillus acidophilus (strain ATCC 700396 / NCK56 / N2 / NCFM).